The primary structure comprises 492 residues: Variant surface glycoprotein MITAT 1.1 (492 aa).

A signal peptide spans 1 to 32; sequence MATGRAKNTKWARWLSTAGLIIVVTLPATTMA. Cystine bridges form between Cys47-Cys177 and Cys155-Cys222. N-linked (GlcNAc...) asparagine glycosylation is found at Asn298 and Asn471. Residue Ser475 is the site of GPI-anchor amidated serine attachment. A propeptide spans 476-492 (removed in mature form); that stretch reads NSFLIHKAPLLLAFLLF.

The protein resides in the cell membrane. In terms of biological role, VSG forms a coat on the surface of the parasite. The trypanosome evades the immune response of the host by expressing a series of antigenically distinct VSGs from an estimated 1000 VSG genes. The sequence is that of Variant surface glycoprotein MITAT 1.1 from Trypanosoma brucei brucei.